The sequence spans 275 residues: Large ribosomal subunit protein uL2 (275 aa).

2 disordered regions span residues 1-20 and 214-275; these read MAVK…TTAD and WLGR…TRRK. The span at 255–275 shows a compositional bias: basic residues; sequence KGLKTRRKRKTSDRFIVTRRK.

This sequence belongs to the universal ribosomal protein uL2 family. As to quaternary structure, part of the 50S ribosomal subunit. Forms a bridge to the 30S subunit in the 70S ribosome.

Functionally, one of the primary rRNA binding proteins. Required for association of the 30S and 50S subunits to form the 70S ribosome, for tRNA binding and peptide bond formation. It has been suggested to have peptidyltransferase activity; this is somewhat controversial. Makes several contacts with the 16S rRNA in the 70S ribosome. The sequence is that of Large ribosomal subunit protein uL2 (rplB) from Deinococcus radiodurans (strain ATCC 13939 / DSM 20539 / JCM 16871 / CCUG 27074 / LMG 4051 / NBRC 15346 / NCIMB 9279 / VKM B-1422 / R1).